The sequence spans 137 residues: 6,7-dimethyl-8-ribityllumazine synthase (137 aa).

5-amino-6-(D-ribitylamino)uracil-binding positions include Phe11, 43 to 45, and 67 to 69; these read SFD and CVI. 72–73 contacts (2S)-2-hydroxy-3-oxobutyl phosphate; the sequence is DT. The Proton donor role is filled by His75. Leu100 is a binding site for 5-amino-6-(D-ribitylamino)uracil. Arg115 serves as a coordination point for (2S)-2-hydroxy-3-oxobutyl phosphate.

Belongs to the DMRL synthase family. In terms of assembly, forms an icosahedral capsid composed of 60 subunits, arranged as a dodecamer of pentamers.

The catalysed reaction is (2S)-2-hydroxy-3-oxobutyl phosphate + 5-amino-6-(D-ribitylamino)uracil = 6,7-dimethyl-8-(1-D-ribityl)lumazine + phosphate + 2 H2O + H(+). It participates in cofactor biosynthesis; riboflavin biosynthesis; riboflavin from 2-hydroxy-3-oxobutyl phosphate and 5-amino-6-(D-ribitylamino)uracil: step 1/2. In terms of biological role, catalyzes the formation of 6,7-dimethyl-8-ribityllumazine by condensation of 5-amino-6-(D-ribitylamino)uracil with 3,4-dihydroxy-2-butanone 4-phosphate. This is the penultimate step in the biosynthesis of riboflavin. This chain is 6,7-dimethyl-8-ribityllumazine synthase, found in Methanococcus maripaludis (strain C5 / ATCC BAA-1333).